The chain runs to 544 residues: Serine/threonine-protein kinase PAK 1 (544 aa).

Residues 1-79 (MSNNGLDVQD…KERPEISLPS (79 aa)) are disordered. S2 carries the post-translational modification N-acetylserine. S21 is modified (phosphoserine; by PKB and autocatalysis). S57 carries the phosphoserine; by autocatalysis modification. Over residues 68 to 79 (KEKERPEISLPS) the composition is skewed to basic and acidic residues. The tract at residues 70-140 (KERPEISLPS…YNSKKTSNSQ (71 aa)) is autoregulatory region. The CRIB domain maps to 75–88 (ISLPSDFEHTIHVG). Residues 75–105 (ISLPSDFEHTIHVGFDAVTGEFTGMPEQWAR) are GTPase-binding. At T84 the chain carries Phosphothreonine; by OXSR1. Phosphoserine is present on S115. Phosphotyrosine occurs at positions 131 and 142. S144 and S149 each carry phosphoserine; by autocatalysis. The segment covering 150-166 (AEDYNSSNTLNVKTVSE) has biased composition (polar residues). The segment at 150-195 (AEDYNSSNTLNVKTVSETPAVPPVSEDEDDDDDATPPPVIAPRPEH) is disordered. A Phosphotyrosine; by JAK2 modification is found at Y153. Residue S174 is modified to Phosphoserine. Positions 174-183 (SEDEDDDDDA) are enriched in acidic residues. Residue T184 is modified to Phosphothreonine. S198 is modified (phosphoserine; by autocatalysis). Y200 bears the Phosphotyrosine; by JAK2 mark. At S203 the chain carries Phosphoserine; by autocatalysis. Residues 209-250 (PVTPTRDVATSPISPTENNTTPPDALTRNTEKQKKKPKMSDE) form a disordered region. A phosphothreonine mark is found at T211 and T218. Phosphoserine is present on residues S219 and S222. The span at 219–230 (SPISPTENNTTP) shows a compositional bias: polar residues. T224, T228, and T229 each carry phosphothreonine. The region spanning 269-520 (YTRFEKIGQG…AKELLQHQFL (252 aa)) is the Protein kinase domain. 275 to 283 (IGQGASGTV) is an ATP binding site. A Phosphotyrosine; by JAK2 modification is found at Y284. K298 is a binding site for ATP. The active-site Proton acceptor is the D388. At T422 the chain carries Phosphothreonine; by autocatalysis, BRSK2 and PDPK1.

It belongs to the protein kinase superfamily. STE Ser/Thr protein kinase family. STE20 subfamily. Homodimer in its autoinhibited state. Active as monomer. Interacts with GIT1. Component of cytoplasmic complexes, which also contains PXN, ARHGEF7 and GIT1. Interacts with NISCH. Interacts with DVL1; mediates the formation of a DVL1, MUSK and PAK1 ternary complex involved in AChR clustering. Binds to the caspase-cleaved p110 isoform of CDC2L1 and CDC2L2, p110C, but not the full-length proteins. Interacts with ARHGEF7. Interacts with SCRIB. Interacts with PDPK1. Interacts (via kinase domain) with RAF1. Interacts with NCK1 and NCK2. Interacts with TBCB. Interacts with BRSK2. Interacts tightly with GTP-bound but not GDP-bound CDC42/P21 and RAC1. Interacts with SNAI1. Interacts with CIB1 (via N-terminal region); the interaction is direct, promotes PAK1 activity and occurs in a calcium-dependent manner. Interacts with INPP5K. Interacts with gamma-tubulin. Interacts with RHOU; the interaction promotes PAK1 activation. Requires Mg(2+) as cofactor. Autophosphorylated in trans, meaning that in a dimer, one kinase molecule phosphorylates the other one. Activated by autophosphorylation at Thr-422 in response to a conformation change, triggered by interaction with GTP-bound CDC42 or RAC1. Activated by phosphorylation at Thr-422 by PDPK1. Phosphorylated by JAK2 in response to PRL; this increases PAK1 kinase activity. Phosphorylated at Ser-21 by PKB/AKT; this reduces interaction with NCK1 and association with focal adhesion sites. Activated by phosphorylation at Thr-422 by BRSK2. Upon DNA damage, phosphorylated at Thr-211 and translocates to the nucleoplasm. Phosphorylated at tyrosine residues, which can be enhanced by NTN1. Expressed predominantly in the brain, with higher expression in neuronal groups associated with motor function, and at lower levels in the spleen.

It is found in the cytoplasm. It localises to the cell junction. The protein resides in the focal adhesion. Its subcellular location is the cell projection. The protein localises to the lamellipodium. It is found in the cell membrane. It localises to the ruffle membrane. The protein resides in the invadopodium. Its subcellular location is the nucleus. The protein localises to the nucleoplasm. It is found in the chromosome. It localises to the cytoskeleton. The protein resides in the microtubule organizing center. Its subcellular location is the centrosome. It carries out the reaction L-seryl-[protein] + ATP = O-phospho-L-seryl-[protein] + ADP + H(+). The enzyme catalyses L-threonyl-[protein] + ATP = O-phospho-L-threonyl-[protein] + ADP + H(+). With respect to regulation, phosphorylation of Thr-84 by OXSR1 inhibits activation. Activated by binding small G proteins. Binding of GTP-bound CDC42 or RAC1 to the autoregulatory region releases monomers from the autoinhibited dimer, and enables activation by phosphorylation of Thr-422. In terms of biological role, protein kinase involved in intracellular signaling pathways downstream of integrins and receptor-type kinases that plays an important role in cytoskeleton dynamics, in cell adhesion, migration, proliferation, apoptosis, mitosis, and in vesicle-mediated transport processes. Can directly phosphorylate BAD and protects cells against apoptosis. Activated by interaction with CDC42 and RAC1. Functions as a GTPase effector that links the Rho-related GTPases CDC42 and RAC1 to the JNK MAP kinase pathway. Phosphorylates and activates MAP2K1, and thereby mediates activation of downstream MAP kinases. Involved in the reorganization of the actin cytoskeleton, actin stress fibers and of focal adhesion complexes. Phosphorylates the tubulin chaperone TBCB and thereby plays a role in the regulation of microtubule biogenesis and organization of the tubulin cytoskeleton. Plays a role in the regulation of insulin secretion in response to elevated glucose levels. Part of a ternary complex that contains PAK1, DVL1 and MUSK that is important for MUSK-dependent regulation of AChR clustering during the formation of the neuromuscular junction (NMJ). Activity is inhibited in cells undergoing apoptosis, potentially due to binding of CDC2L1 and CDC2L2. Phosphorylates MYL9/MLC2. Phosphorylates RAF1 at 'Ser-338' and 'Ser-339' resulting in: activation of RAF1, stimulation of RAF1 translocation to mitochondria, phosphorylation of BAD by RAF1, and RAF1 binding to BCL2. Phosphorylates SNAI1 at 'Ser-246' promoting its transcriptional repressor activity by increasing its accumulation in the nucleus. In podocytes, promotes NR3C2 nuclear localization. Required for atypical chemokine receptor ACKR2-induced phosphorylation of LIMK1 and cofilin (CFL1) and for the up-regulation of ACKR2 from endosomal compartment to cell membrane, increasing its efficiency in chemokine uptake and degradation. In synapses, seems to mediate the regulation of F-actin cluster formation performed by SHANK3, maybe through CFL1 phosphorylation and inactivation. Plays a role in RUFY3-mediated facilitating gastric cancer cells migration and invasion. In response to DNA damage, phosphorylates MORC2 which activates its ATPase activity and facilitates chromatin remodeling. In neurons, plays a crucial role in regulating GABA(A) receptor synaptic stability and hence GABAergic inhibitory synaptic transmission through its role in F-actin stabilization. In hippocampal neurons, necessary for the formation of dendritic spines and excitatory synapses; this function is dependent on kinase activity and may be exerted by the regulation of actomyosin contractility through the phosphorylation of myosin II regulatory light chain (MLC). Along with GIT1, positively regulates microtubule nucleation during interphase. Phosphorylates FXR1, promoting its localization to stress granules and activity. Phosphorylates ILK on 'Thr-173' and 'Ser-246', promoting nuclear export of ILK. This Rattus norvegicus (Rat) protein is Serine/threonine-protein kinase PAK 1.